The primary structure comprises 298 residues: tRNA pseudouridine synthase B (298 aa).

Aspartate 44 (nucleophile) is an active-site residue.

The protein belongs to the pseudouridine synthase TruB family. Type 1 subfamily.

It carries out the reaction uridine(55) in tRNA = pseudouridine(55) in tRNA. In terms of biological role, responsible for synthesis of pseudouridine from uracil-55 in the psi GC loop of transfer RNAs. The protein is tRNA pseudouridine synthase B of Mycobacteroides abscessus (strain ATCC 19977 / DSM 44196 / CCUG 20993 / CIP 104536 / JCM 13569 / NCTC 13031 / TMC 1543 / L948) (Mycobacterium abscessus).